A 1364-amino-acid polypeptide reads, in one-letter code: DNA-directed RNA polymerase subunit beta (1364 aa).

The protein belongs to the RNA polymerase beta chain family. In terms of assembly, the RNAP catalytic core consists of 2 alpha, 1 beta, 1 beta' and 1 omega subunit. When a sigma factor is associated with the core the holoenzyme is formed, which can initiate transcription.

It carries out the reaction RNA(n) + a ribonucleoside 5'-triphosphate = RNA(n+1) + diphosphate. Its function is as follows. DNA-dependent RNA polymerase catalyzes the transcription of DNA into RNA using the four ribonucleoside triphosphates as substrates. The chain is DNA-directed RNA polymerase subunit beta from Desulfatibacillum aliphaticivorans.